A 210-amino-acid polypeptide reads, in one-letter code: Dephospho-CoA kinase (210 aa).

The region spanning 4-202 (WVGLTGGIGS…AFYSGIFASK (199 aa)) is the DPCK domain. Residue 12–17 (GSGKSA) coordinates ATP.

The protein belongs to the CoaE family.

The protein resides in the cytoplasm. The catalysed reaction is 3'-dephospho-CoA + ATP = ADP + CoA + H(+). It participates in cofactor biosynthesis; coenzyme A biosynthesis; CoA from (R)-pantothenate: step 5/5. Catalyzes the phosphorylation of the 3'-hydroxyl group of dephosphocoenzyme A to form coenzyme A. This is Dephospho-CoA kinase from Neisseria gonorrhoeae.